Here is a 129-residue protein sequence, read N- to C-terminus: Large ribosomal subunit protein bL19 (129 aa).

This sequence belongs to the bacterial ribosomal protein bL19 family.

This protein is located at the 30S-50S ribosomal subunit interface and may play a role in the structure and function of the aminoacyl-tRNA binding site. In Paraburkholderia phytofirmans (strain DSM 17436 / LMG 22146 / PsJN) (Burkholderia phytofirmans), this protein is Large ribosomal subunit protein bL19.